The primary structure comprises 138 residues: Putative pre-16S rRNA nuclease (138 aa).

It belongs to the YqgF nuclease family.

It localises to the cytoplasm. Could be a nuclease involved in processing of the 5'-end of pre-16S rRNA. The chain is Putative pre-16S rRNA nuclease from Helicobacter hepaticus (strain ATCC 51449 / 3B1).